The primary structure comprises 482 residues: 7-deoxyloganetic acid glucosyl transferase (482 aa).

His-22 (proton acceptor) is an active-site residue. His-22 provides a ligand contact to an anthocyanidin. Catalysis depends on Asp-127, which acts as the Charge relay. Thr-149, Ala-362, Gln-364, His-379, Trp-382, Asn-383, Ser-384, and Glu-387 together coordinate UDP-alpha-D-glucose. Ala-402 contacts an anthocyanidin. UDP-alpha-D-glucose is bound by residues Asp-403 and Gln-404.

Belongs to the UDP-glycosyltransferase family. In terms of tissue distribution, expressed in the leaf internal phloem-associated parenchyma (IPAP) inside the mesophyll. Mostly observed in leaves, roots and stems, and, to a lower extent, in flowers.

Its subcellular location is the nucleus. The protein resides in the cytoplasm. It is found in the cytosol. The enzyme catalyses 7-deoxyloganetate + UDP-alpha-D-glucose = 7-deoxyloganate + UDP + H(+). It participates in alkaloid biosynthesis. Component of the seco-iridoid and derivatives monoterpenoid indole alkaloids (MIAs, e.g. vincristine, quinine, and strychnine) biosynthesis pathway. Catalyzes the glucosylation of 7-deoxyloganetic acid to form 7-deoxyloganic acid using UDP-glucose as the sugar donor. Inactive with loganetic acid, loganetin, iridodial, iridotrial, 8-OH-geraniol, jasmonic acid, gibberellic acid, indole acetic acid, salicylic acid, abscisic acid, zeatin and luteolin. The protein is 7-deoxyloganetic acid glucosyl transferase of Catharanthus roseus (Madagascar periwinkle).